The primary structure comprises 363 residues: S-adenosylmethionine:tRNA ribosyltransferase-isomerase (363 aa).

It belongs to the QueA family. Monomer.

It is found in the cytoplasm. It catalyses the reaction 7-aminomethyl-7-carbaguanosine(34) in tRNA + S-adenosyl-L-methionine = epoxyqueuosine(34) in tRNA + adenine + L-methionine + 2 H(+). Its pathway is tRNA modification; tRNA-queuosine biosynthesis. In terms of biological role, transfers and isomerizes the ribose moiety from AdoMet to the 7-aminomethyl group of 7-deazaguanine (preQ1-tRNA) to give epoxyqueuosine (oQ-tRNA). The sequence is that of S-adenosylmethionine:tRNA ribosyltransferase-isomerase from Haemophilus influenzae (strain PittGG).